Reading from the N-terminus, the 226-residue chain is Late protein I226R (226 aa).

Residues 1-16 (MKMETFLVCLFHNADG) form the signal peptide. N-linked (GlcNAc...) asparagine; by host glycans are attached at residues asparagine 142 and asparagine 164.

The protein belongs to the asfivirus I226R family.

Its function is as follows. Plays a role in the inhibition of host NF-kappa-B and IRF3 signaling pathways. Mechanistically, promotes the degradation of host IKBKG through enhancing its ubiquitination leading to inhibition of both pathways. The protein is Late protein I226R of African swine fever virus (isolate Tick/South Africa/Pretoriuskop Pr4/1996) (ASFV).